The primary structure comprises 474 residues: Putative response regulator NtrX-like (474 aa).

One can recognise a Response regulatory domain in the interval 5–121 (DVLIVDDEES…KLVILLTRAC (117 aa)). D54 bears the 4-aspartylphosphate mark. In terms of domain architecture, Sigma-54 factor interaction spans 143 to 368 (LVGECSVTLK…LRNVVEWTLI (226 aa)). ATP contacts are provided by residues 171–178 (GKVGSGKE) and 231–240 (ANNGTLYIDE).

In terms of biological role, member of the two-component regulatory system RC0849/RC0948. The protein is Putative response regulator NtrX-like of Rickettsia conorii (strain ATCC VR-613 / Malish 7).